A 438-amino-acid polypeptide reads, in one-letter code: UDP-N-acetylmuramoylalanine--D-glutamate ligase (438 aa).

Position 112 to 118 (112 to 118) interacts with ATP; that stretch reads GSNGKST.

The protein belongs to the MurCDEF family.

It localises to the cytoplasm. The catalysed reaction is UDP-N-acetyl-alpha-D-muramoyl-L-alanine + D-glutamate + ATP = UDP-N-acetyl-alpha-D-muramoyl-L-alanyl-D-glutamate + ADP + phosphate + H(+). Its pathway is cell wall biogenesis; peptidoglycan biosynthesis. Its function is as follows. Cell wall formation. Catalyzes the addition of glutamate to the nucleotide precursor UDP-N-acetylmuramoyl-L-alanine (UMA). The polypeptide is UDP-N-acetylmuramoylalanine--D-glutamate ligase (murD) (Escherichia coli O6:H1 (strain CFT073 / ATCC 700928 / UPEC)).